The primary structure comprises 317 residues: MYTKILGTGSYLPTQIRSNTDLANMVDTSDEWIIARTGIRERRIASANETVFSMGSSAAEQALHMAGISANKVGMIIVATTSSSHAFPSSACQIQRDLGIMDCVAFDLAAACAGFPYALSIVDQYIKNGVIEYALVIGSDVLSNTPAPDDRSTLILFGDGAGAVLVGCSEQPGILSTHLHADGSYSDLLTLPYYNRFNPTADIYLKMSGNEVFKIAVTKLAHLVDETMSINHLSSKEIDWLVPHQANLRIISATAKLLGMKMNKVIVTLDKHGNTSAASIPLALDEAVRDGRIKTDQLLLLEAFGGGLTWGSALLRF.

Catalysis depends on residues C112 and H244. The segment at 245–249 (QANLR) is ACP-binding. N274 is an active-site residue.

It belongs to the thiolase-like superfamily. FabH family. In terms of assembly, homodimer.

The protein resides in the cytoplasm. It catalyses the reaction malonyl-[ACP] + acetyl-CoA + H(+) = 3-oxobutanoyl-[ACP] + CO2 + CoA. The protein operates within lipid metabolism; fatty acid biosynthesis. Functionally, catalyzes the condensation reaction of fatty acid synthesis by the addition to an acyl acceptor of two carbons from malonyl-ACP. Catalyzes the first condensation reaction which initiates fatty acid synthesis and may therefore play a role in governing the total rate of fatty acid production. Possesses both acetoacetyl-ACP synthase and acetyl transacylase activities. Its substrate specificity determines the biosynthesis of branched-chain and/or straight-chain of fatty acids. In Baumannia cicadellinicola subsp. Homalodisca coagulata, this protein is Beta-ketoacyl-[acyl-carrier-protein] synthase III.